The sequence spans 321 residues: tRNA-dihydrouridine synthase B (321 aa).

FMN-binding positions include P16–A18 and Q70. Catalysis depends on C100, which acts as the Proton donor. FMN is bound by residues K139, N200–D202, and G224–R225.

This sequence belongs to the Dus family. DusB subfamily. FMN serves as cofactor.

The catalysed reaction is a 5,6-dihydrouridine in tRNA + NAD(+) = a uridine in tRNA + NADH + H(+). The enzyme catalyses a 5,6-dihydrouridine in tRNA + NADP(+) = a uridine in tRNA + NADPH + H(+). In terms of biological role, catalyzes the synthesis of 5,6-dihydrouridine (D), a modified base found in the D-loop of most tRNAs, via the reduction of the C5-C6 double bond in target uridines. This Escherichia coli O157:H7 protein is tRNA-dihydrouridine synthase B.